Consider the following 773-residue polypeptide: Phenylalanine--tRNA ligase beta subunit (773 aa).

Residues 39 to 150 form the tRNA-binding domain; sequence LKAPDKVVVG…GKLELGRPLN (112 aa). Residues 391 to 467 enclose the B5 domain; that stretch reads KELPIIPISI…RIIGIDNIAS (77 aa). Residues D445, D451, E454, and E455 each coordinate Mg(2+). One can recognise an FDX-ACB domain in the interval 682 to 773; sequence SKFPAITRDL…TLKNLGLDLR (92 aa).

The protein belongs to the phenylalanyl-tRNA synthetase beta subunit family. Type 1 subfamily. Tetramer of two alpha and two beta subunits. Requires Mg(2+) as cofactor.

The protein localises to the cytoplasm. It carries out the reaction tRNA(Phe) + L-phenylalanine + ATP = L-phenylalanyl-tRNA(Phe) + AMP + diphosphate + H(+). The chain is Phenylalanine--tRNA ligase beta subunit (pheT) from Campylobacter jejuni subsp. jejuni serotype O:2 (strain ATCC 700819 / NCTC 11168).